A 255-amino-acid chain; its full sequence is Ribonuclease HII (255 aa).

The 184-residue stretch at 72–255 (NYIAGVDEAG…RLSFVKNFVE (184 aa)) folds into the RNase H type-2 domain. Asp78, Glu79, and Asp170 together coordinate a divalent metal cation.

The protein belongs to the RNase HII family. It depends on Mn(2+) as a cofactor. The cofactor is Mg(2+).

It localises to the cytoplasm. It carries out the reaction Endonucleolytic cleavage to 5'-phosphomonoester.. In terms of biological role, endonuclease that specifically degrades the RNA of RNA-DNA hybrids. In Ruminiclostridium cellulolyticum (strain ATCC 35319 / DSM 5812 / JCM 6584 / H10) (Clostridium cellulolyticum), this protein is Ribonuclease HII.